We begin with the raw amino-acid sequence, 444 residues long: Phosphoglucosamine mutase (444 aa).

Serine 102 serves as the catalytic Phosphoserine intermediate. 4 residues coordinate Mg(2+): serine 102, aspartate 241, aspartate 243, and aspartate 245. Serine 102 carries the post-translational modification Phosphoserine.

It belongs to the phosphohexose mutase family. Mg(2+) serves as cofactor. Activated by phosphorylation.

It carries out the reaction alpha-D-glucosamine 1-phosphate = D-glucosamine 6-phosphate. In terms of biological role, catalyzes the conversion of glucosamine-6-phosphate to glucosamine-1-phosphate. This Actinobacillus succinogenes (strain ATCC 55618 / DSM 22257 / CCUG 43843 / 130Z) protein is Phosphoglucosamine mutase.